Reading from the N-terminus, the 415-residue chain is Phosphoglycerate kinase (415 aa).

13 residues coordinate (2R)-3-phosphoglycerate: Val22, Asp23, Phe24, Asn25, Gln37, Arg38, Ser61, His62, Gly64, Arg65, Arg121, His168, and Arg169. Gly212 is a binding site for ADP. Gly212 serves as a coordination point for CDP. 2 residues coordinate AMP: Ala213 and Lys214. Ala213 is a binding site for ATP. Ala213 contacts Mg(2+). Mg(2+)-binding residues include Ala216 and Asp217. Asp217 is a CDP binding site. Lys218 contacts AMP. Residue Lys218 participates in ATP binding. Position 236 (Gly236) interacts with ADP. Position 236 (Gly236) interacts with CDP. Residues Gly237 and Gly311 each coordinate AMP. Positions 237 and 311 each coordinate ATP. CDP is bound by residues Gly336 and Phe341. Residue Phe341 coordinates ADP. AMP is bound at residue Glu342. The ATP site is built by Glu342, Asp373, and Thr374. Asp373 is a binding site for Mg(2+).

Belongs to the phosphoglycerate kinase family. In terms of assembly, monomer. The cofactor is Mg(2+).

It is found in the cytoplasm. It catalyses the reaction (2R)-3-phosphoglycerate + ATP = (2R)-3-phospho-glyceroyl phosphate + ADP. The protein operates within carbohydrate degradation; glycolysis; pyruvate from D-glyceraldehyde 3-phosphate: step 2/5. In terms of biological role, enzyme of the glycolytic pathway. Glycolysis is essential in glial cells but not in neurons; neurons rely on the citric acid cycle for their energy needs, and on lactate and alanine secreted into the hemolymph by glial cells to fuel it. The polypeptide is Phosphoglycerate kinase (Drosophila melanogaster (Fruit fly)).